Consider the following 350-residue polypeptide: Cytochrome c biogenesis protein CcsA (350 aa).

A run of 8 helical transmembrane segments spans residues 23 to 43 (NVAF…AAFP), 47 to 67 (LLAE…AALL), 82 to 102 (LYES…LALH), 108 to 128 (WVGV…ALVL), 153 to 173 (VMLL…SFLI), 258 to 278 (LIGL…VWAN), 293 to 313 (WALI…TKGW), and 319 to 339 (ALLA…VNFL).

This sequence belongs to the CcmF/CycK/Ccl1/NrfE/CcsA family. As to quaternary structure, may interact with ccs1.

It localises to the cellular thylakoid membrane. Required during biogenesis of c-type cytochromes (cytochrome c6 and cytochrome f) at the step of heme attachment. This chain is Cytochrome c biogenesis protein CcsA, found in Synechococcus sp. (strain JA-2-3B'a(2-13)) (Cyanobacteria bacterium Yellowstone B-Prime).